A 1252-amino-acid polypeptide reads, in one-letter code: ATP-dependent helicase/nuclease subunit A (1252 aa).

The UvrD-like helicase ATP-binding domain maps to 6-489; it reads TNWTEEQKEA…VLLYKNFRSR (484 aa). 27-34 provides a ligand contact to ATP; the sequence is AAAGSGKT. The UvrD-like helicase C-terminal domain occupies 523–811; sequence ANYEEIEENL…RIMSIHKSKG (289 aa).

It belongs to the helicase family. AddA subfamily. As to quaternary structure, heterodimer of AddA and AddB/RexB. The cofactor is Mg(2+).

The enzyme catalyses Couples ATP hydrolysis with the unwinding of duplex DNA by translocating in the 3'-5' direction.. It carries out the reaction ATP + H2O = ADP + phosphate + H(+). Its function is as follows. The heterodimer acts as both an ATP-dependent DNA helicase and an ATP-dependent, dual-direction single-stranded exonuclease. Recognizes the chi site generating a DNA molecule suitable for the initiation of homologous recombination. The AddA nuclease domain is required for chi fragment generation; this subunit has the helicase and 3' -&gt; 5' nuclease activities. The chain is ATP-dependent helicase/nuclease subunit A from Clostridium acetobutylicum (strain ATCC 824 / DSM 792 / JCM 1419 / IAM 19013 / LMG 5710 / NBRC 13948 / NRRL B-527 / VKM B-1787 / 2291 / W).